The sequence spans 416 residues: 26S proteasome regulatory subunit 8 (416 aa).

Residues 1 to 18 are compositionally biased toward low complexity; sequence MAPPASTASSADPSKPTA. A disordered region spans residues 1–29; that stretch reads MAPPASTASSADPSKPTAQKLTEESDEKT. 200–207 lines the ATP pocket; that stretch reads GPPGTGKT.

Belongs to the AAA ATPase family. As to quaternary structure, component of the 19S proteasome regulatory particle complex. The 26S proteasome consists of a 20S core particle (CP) and two 19S regulatory subunits (RP). Interacts with elt-2.

The protein resides in the cytoplasm. Its subcellular location is the nucleus. In terms of biological role, component of the 26S proteasome, a multiprotein complex involved in the ATP-dependent degradation of ubiquitinated proteins. This complex plays a key role in the maintenance of protein homeostasis by removing misfolded or damaged proteins, which could impair cellular functions, and by removing proteins whose functions are no longer required. Therefore, the proteasome participates in numerous cellular processes, including cell cycle progression, apoptosis, or DNA damage repair. Belongs to the heterohexameric ring of AAA (ATPases associated with diverse cellular activities) proteins that unfolds ubiquitinated target proteins that are concurrently translocated into a proteolytic chamber and degraded into peptides. In addition, regulates gene expression in response to bacterial infection. Binds to the GATA transcription factor elt-2 to control its transcriptional activity and thus the expression of elt-2-dependent genes in response to infection by Gram-negative bacteria such as P.aeruginosa. The chain is 26S proteasome regulatory subunit 8 from Caenorhabditis elegans.